The chain runs to 315 residues: Olfactory receptor 10A4 (315 aa).

Residues 1–26 lie on the Extracellular side of the membrane; that stretch reads MMWENWTIVSEFVLVSFSALSTELQA. N-linked (GlcNAc...) asparagine glycosylation occurs at Asn5. The chain crosses the membrane as a helical span at residues 27–47; the sequence is LLFLLFLTIYLVTLMGNVLII. Residues 48–55 are Cytoplasmic-facing; that stretch reads LVTIADSA. The chain crosses the membrane as a helical span at residues 56–76; the sequence is LQSPMYFFLRNLSFLEIGFNL. Topologically, residues 77 to 100 are extracellular; it reads VIVPKMLGTLIIQDTTISFLGCAT. Cys98 and Cys190 are oxidised to a cystine. A helical transmembrane segment spans residues 101–121; that stretch reads QMYFFFFFGAAECCLLATMAY. Topologically, residues 122–140 are cytoplasmic; sequence DRYVAICDPLHYPVIMGHI. The chain crosses the membrane as a helical span at residues 141–161; it reads SCAQLAAASWFSGFSVATVQT. Residues 162–198 lie on the Extracellular side of the membrane; that stretch reads TWIFSFPFCGPNRVNHFFCDSPPVIALVCADTSVFEL. Residues 199 to 218 traverse the membrane as a helical segment; sequence EALTATVLFILFPFLLILGS. At 219–238 the chain is on the cytoplasmic side; the sequence is YVRILSTIFRMPSAEGKHQA. A helical membrane pass occupies residues 239-259; sequence FSTCSAHLLVVSLFYSTAILT. The Extracellular portion of the chain corresponds to 260 to 272; sequence YFRPQSSASSESK. The chain crosses the membrane as a helical span at residues 273–293; that stretch reads KLLSLSSTVVTPMLNPIIYSS. Topologically, residues 294-315 are cytoplasmic; sequence RNKEVKAALKRLIHRTLGSQKL.

The protein belongs to the G-protein coupled receptor 1 family. As to expression, expressed in the tongue.

It is found in the cell membrane. Functionally, odorant receptor (Potential). May be involved in taste perception. This is Olfactory receptor 10A4 (OR10A4) from Homo sapiens (Human).